A 279-amino-acid polypeptide reads, in one-letter code: NAD kinase (279 aa).

D57 functions as the Proton acceptor in the catalytic mechanism. Residues 57 to 58, 133 to 134, R159, D161, and 172 to 177 contribute to the NAD(+) site; these read DG, NE, and TAYNKS.

The protein belongs to the NAD kinase family. It depends on a divalent metal cation as a cofactor.

The protein localises to the cytoplasm. The catalysed reaction is NAD(+) + ATP = ADP + NADP(+) + H(+). In terms of biological role, involved in the regulation of the intracellular balance of NAD and NADP, and is a key enzyme in the biosynthesis of NADP. Catalyzes specifically the phosphorylation on 2'-hydroxyl of the adenosine moiety of NAD to yield NADP. The protein is NAD kinase of Streptococcus pyogenes serotype M12 (strain MGAS2096).